The following is a 540-amino-acid chain: Chaperonin GroEL (540 aa).

ATP is bound by residues 29-32 (TLGP), 86-90 (DGTTT), Gly-413, 476-478 (NAA), and Asp-492.

This sequence belongs to the chaperonin (HSP60) family. As to quaternary structure, forms a cylinder of 14 subunits composed of two heptameric rings stacked back-to-back. Interacts with the co-chaperonin GroES.

It localises to the cytoplasm. It carries out the reaction ATP + H2O + a folded polypeptide = ADP + phosphate + an unfolded polypeptide.. In terms of biological role, together with its co-chaperonin GroES, plays an essential role in assisting protein folding. The GroEL-GroES system forms a nano-cage that allows encapsulation of the non-native substrate proteins and provides a physical environment optimized to promote and accelerate protein folding. The protein is Chaperonin GroEL of Streptococcus agalactiae serotype V (strain ATCC BAA-611 / 2603 V/R).